The chain runs to 80 residues: MSDIEQRVKKIVAEQLGVAEADIKIESSFVDDLGADSLDTVELVMALEDEFEMEIPDEQAEKITTVQQAIDYAKAHVKAA.

The Carrier domain occupies 2 to 77 (SDIEQRVKKI…QAIDYAKAHV (76 aa)). Position 37 is an O-(pantetheine 4'-phosphoryl)serine (Ser-37).

Belongs to the acyl carrier protein (ACP) family. 4'-phosphopantetheine is transferred from CoA to a specific serine of apo-ACP by AcpS. This modification is essential for activity because fatty acids are bound in thioester linkage to the sulfhydryl of the prosthetic group.

The protein resides in the cytoplasm. It participates in lipid metabolism; fatty acid biosynthesis. In terms of biological role, carrier of the growing fatty acid chain in fatty acid biosynthesis. The sequence is that of Acyl carrier protein from Herminiimonas arsenicoxydans.